The primary structure comprises 165 residues: Small ribosomal subunit protein eS10 (165 aa).

Tyrosine 12 carries the post-translational modification Phosphotyrosine. The tract at residues 90-165 (VPATLRRSRP…FGRGRGQPPQ (76 aa)) is disordered. Residues 97 to 128 (SRPETGRPRPKGPEGERPARFTRGEADRDTYR) show a composition bias toward basic and acidic residues. Residues lysine 138 and lysine 139 each participate in a glycyl lysine isopeptide (Lys-Gly) (interchain with G-Cter in ubiquitin) cross-link. Serine 146 carries the post-translational modification Phosphoserine. Arginine 153 is modified (omega-N-methylarginine). Residues 154–165 (GGFGRGRGQPPQ) are compositionally biased toward gly residues. 2 positions are modified to symmetric dimethylarginine: arginine 158 and arginine 160.

Belongs to the eukaryotic ribosomal protein eS10 family. As to quaternary structure, component of the small ribosomal subunit. The methylated form interacts with NPM1. Methylated by PRMT5. Methylation is necessary for its interaction with NPS1, its localization in the granular component (GC) region of the nucleolus, for the proper assembly of ribosomes, protein synthesis and optimal cell proliferation. In terms of processing, monoubiquitinated by ZNF598 when a ribosome has stalled during translation of poly(A) sequences, leading to preclude synthesis of a long poly-lysine tail and initiate the ribosome quality control (RQC) pathway to degrade the potentially detrimental aberrant nascent polypeptide. Deubiquitinated by OTUD3 and USP21, antagonizing ZNF598 activity. Deubiquitinated by OTUD1, antagonizing ZNF598 activity and stimulating formation of polysomes: deubiquitination by OTUD1 promotes stability and translation of a subset mRNAs with a high abundance of rare codons can limit the translation rate. Deubiquitinated by USP10.

The protein resides in the cytoplasm. Its subcellular location is the nucleus. The protein localises to the nucleolus. Component of the 40S ribosomal subunit. The ribosome is a large ribonucleoprotein complex responsible for the synthesis of proteins in the cell. This chain is Small ribosomal subunit protein eS10 (Rps10), found in Rattus norvegicus (Rat).